Reading from the N-terminus, the 272-residue chain is Putative phosphoenolpyruvate synthase regulatory protein (272 aa).

Position 152-159 (152-159 (GVSRSGKT)) interacts with ADP.

The protein belongs to the pyruvate, phosphate/water dikinase regulatory protein family. PSRP subfamily.

The catalysed reaction is [pyruvate, water dikinase] + ADP = [pyruvate, water dikinase]-phosphate + AMP + H(+). The enzyme catalyses [pyruvate, water dikinase]-phosphate + phosphate + H(+) = [pyruvate, water dikinase] + diphosphate. Its function is as follows. Bifunctional serine/threonine kinase and phosphorylase involved in the regulation of the phosphoenolpyruvate synthase (PEPS) by catalyzing its phosphorylation/dephosphorylation. This Methylibium petroleiphilum (strain ATCC BAA-1232 / LMG 22953 / PM1) protein is Putative phosphoenolpyruvate synthase regulatory protein.